Reading from the N-terminus, the 117-residue chain is Flagellar transcriptional regulator FlhD (117 aa).

This sequence belongs to the FlhD family. Homodimer; disulfide-linked. Forms a heterohexamer composed of two FlhC and four FlhD subunits. Each FlhC binds a FlhD dimer, forming a heterotrimer, and a hexamer assembles by dimerization of two heterotrimers.

It is found in the cytoplasm. In terms of biological role, functions in complex with FlhC as a master transcriptional regulator that regulates transcription of several flagellar and non-flagellar operons by binding to their promoter region. Activates expression of class 2 flagellar genes, including fliA, which is a flagellum-specific sigma factor that turns on the class 3 genes. Also regulates genes whose products function in a variety of physiological pathways. In Photorhabdus laumondii subsp. laumondii (strain DSM 15139 / CIP 105565 / TT01) (Photorhabdus luminescens subsp. laumondii), this protein is Flagellar transcriptional regulator FlhD.